An 803-amino-acid chain; its full sequence is Translation initiation factor IF-2 (803 aa).

Disordered stretches follow at residues 95-125 (PVVEQKRETEPAPTQEVPLTSDTTNLNEKAE) and 138-209 (EVKE…KLEQ). Polar residues predominate over residues 111–121 (VPLTSDTTNLN). Residues 138–155 (EVKEEAKKTPSEKKETPK) are compositionally biased toward basic and acidic residues. A compositionally biased stretch (basic residues) spans 156–167 (KGPRKETRRSRK). The segment covering 168–188 (PDKEDKWEREELHMTKLVEER) has biased composition (basic and acidic residues). Residues 302-471 (PRAPVVTIMG…LLQAEVLELK (170 aa)) form the tr-type G domain. The G1 stretch occupies residues 311-318 (GHVDHGKT). A GTP-binding site is contributed by 311–318 (GHVDHGKT). The interval 336 to 340 (GITQH) is G2. The interval 357-360 (DTPG) is G3. Residues 357-361 (DTPGH) and 411-414 (NKID) contribute to the GTP site. The interval 411 to 414 (NKID) is G4. The G5 stretch occupies residues 447–449 (SAK).

It belongs to the TRAFAC class translation factor GTPase superfamily. Classic translation factor GTPase family. IF-2 subfamily.

Its subcellular location is the cytoplasm. Its function is as follows. One of the essential components for the initiation of protein synthesis. Protects formylmethionyl-tRNA from spontaneous hydrolysis and promotes its binding to the 30S ribosomal subunits. Also involved in the hydrolysis of GTP during the formation of the 70S ribosomal complex. The protein is Translation initiation factor IF-2 of Coxiella burnetii (strain CbuG_Q212) (Coxiella burnetii (strain Q212)).